Consider the following 379-residue polypeptide: Succinyl-diaminopimelate desuccinylase (379 aa).

A Zn(2+)-binding site is contributed by His70. The active site involves Asp72. Asp103 serves as a coordination point for Zn(2+). Glu137 functions as the Proton acceptor in the catalytic mechanism. Residues Glu138, Glu166, and His352 each contribute to the Zn(2+) site.

Belongs to the peptidase M20A family. DapE subfamily. Homodimer. Requires Zn(2+) as cofactor. Co(2+) is required as a cofactor.

It carries out the reaction N-succinyl-(2S,6S)-2,6-diaminopimelate + H2O = (2S,6S)-2,6-diaminopimelate + succinate. It participates in amino-acid biosynthesis; L-lysine biosynthesis via DAP pathway; LL-2,6-diaminopimelate from (S)-tetrahydrodipicolinate (succinylase route): step 3/3. Functionally, catalyzes the hydrolysis of N-succinyl-L,L-diaminopimelic acid (SDAP), forming succinate and LL-2,6-diaminopimelate (DAP), an intermediate involved in the bacterial biosynthesis of lysine and meso-diaminopimelic acid, an essential component of bacterial cell walls. This is Succinyl-diaminopimelate desuccinylase from Burkholderia cenocepacia (strain HI2424).